The following is a 202-amino-acid chain: Diadenylate cyclase (202 aa).

The chain crosses the membrane as a helical span at residues Val6–Val26. Residues Asn29–Asn185 form the DAC domain.

Belongs to the adenylate cyclase family. DacB/CdaS subfamily. Probably oligomerizes.

Its subcellular location is the cell membrane. The enzyme catalyses 2 ATP = 3',3'-c-di-AMP + 2 diphosphate. Functionally, catalyzes the condensation of 2 ATP molecules into cyclic di-AMP (c-di-AMP), a second messenger used to regulate differing processes in different bacteria. This Mycoplasma pneumoniae (strain ATCC 29342 / M129 / Subtype 1) (Mycoplasmoides pneumoniae) protein is Diadenylate cyclase.